The following is a 1940-amino-acid chain: Myosin-13 (1940 aa).

The 50-residue stretch at 33–82 (DSKKACFAMDDKEMYVKGMIQSRENDKVTVKTLDDRTLTLNSDQVFPMNP) folds into the Myosin N-terminal SH3-like domain. Positions 86–782 (DKIEDMAMMT…LLGLLEEMRD (697 aa)) constitute a Myosin motor domain. At Lys130 the chain carries N6,N6,N6-trimethyllysine. 179 to 186 (GESGAGKT) contacts ATP. Actin-binding stretches follow at residues 659-681 (LNKLMTNLRSTHPHFVRCLIPNE) and 761-775 (RFGHTKVFFKAGLLG). One can recognise an IQ domain in the interval 785–814 (LVTLMTRTQAICRGYLMRVEFKKMMERRES). Positions 843-1940 (LLKSAEAERE…RDVGAQKMEE (1098 aa)) form a coiled coil. Residues 1886 to 1940 (RQAEEAEEQANTQMSKCRRVQHELEEAEERADIAESQVNKLRAKSRDVGAQKMEE) are disordered. Residues 1929–1940 (KSRDVGAQKMEE) show a composition bias toward basic and acidic residues.

It belongs to the TRAFAC class myosin-kinesin ATPase superfamily. Myosin family. As to quaternary structure, muscle myosin is a hexameric protein that consists of 2 heavy chain subunits (MHC), 2 alkali light chain subunits (MLC) and 2 regulatory light chain subunits (MLC-2).

It localises to the cytoplasm. The protein resides in the myofibril. Its function is as follows. Fast twitching myosin mediating the high-velocity and low-tension contractions of specific striated muscles. This is Myosin-13 (MYH13) from Canis lupus familiaris (Dog).